The primary structure comprises 419 residues: UDP-N-acetylglucosamine 1-carboxyvinyltransferase 2 (419 aa).

Residue 22–23 (KN) coordinates phosphoenolpyruvate. R92 contacts UDP-N-acetyl-alpha-D-glucosamine. Catalysis depends on C116, which acts as the Proton donor. 2-(S-cysteinyl)pyruvic acid O-phosphothioketal is present on C116. Residues 121–125 (RPIDL), D306, and I328 each bind UDP-N-acetyl-alpha-D-glucosamine.

The protein belongs to the EPSP synthase family. MurA subfamily.

The protein resides in the cytoplasm. It catalyses the reaction phosphoenolpyruvate + UDP-N-acetyl-alpha-D-glucosamine = UDP-N-acetyl-3-O-(1-carboxyvinyl)-alpha-D-glucosamine + phosphate. It participates in cell wall biogenesis; peptidoglycan biosynthesis. In terms of biological role, cell wall formation. Adds enolpyruvyl to UDP-N-acetylglucosamine. The protein is UDP-N-acetylglucosamine 1-carboxyvinyltransferase 2 of Streptococcus pyogenes serotype M3 (strain ATCC BAA-595 / MGAS315).